The chain runs to 29 residues: Toxin Bcg III 15.67 (29 aa).

The EGF-like domain occupies 2–29 (QGTACTGEHAHSFCLNGGTCRHIQQLGE). C6 and C21 are joined by a disulfide.

It localises to the secreted. The protein localises to the nematocyst. Functionally, has both toxic and EGF activity. The chain is Toxin Bcg III 15.67 from Bunodosoma cangicum (Sea anemone).